A 733-amino-acid polypeptide reads, in one-letter code: Catalase-peroxidase (733 aa).

A cross-link (tryptophyl-tyrosyl-methioninium (Trp-Tyr) (with M-245)) is located at residues 96–219 (WHSAGTYRTG…LAAVQMGLIY (124 aa)). The active-site Proton acceptor is His-97. Residues 219–245 (YVNPEGPNGNPDPLAAAKDIRETFARM) constitute a cross-link (tryptophyl-tyrosyl-methioninium (Tyr-Met) (with W-96)). Heme b is bound at residue His-260.

It belongs to the peroxidase family. Peroxidase/catalase subfamily. In terms of assembly, homodimer or homotetramer. Heme b is required as a cofactor. Formation of the three residue Trp-Tyr-Met cross-link is important for the catalase, but not the peroxidase activity of the enzyme.

The enzyme catalyses H2O2 + AH2 = A + 2 H2O. It carries out the reaction 2 H2O2 = O2 + 2 H2O. Functionally, bifunctional enzyme with both catalase and broad-spectrum peroxidase activity. This chain is Catalase-peroxidase, found in Geobacter sp. (strain M21).